The sequence spans 193 residues: Dual-action ribosomal maturation protein DarP (193 aa).

Over residues 1–10 the composition is skewed to basic and acidic residues; sequence MRGRDEDTGE. Disordered stretches follow at residues 1 to 20 and 170 to 193; these read MRGR…SQQR and SQKP…ENDE. Residues 181 to 193 are compositionally biased toward acidic residues; that stretch reads GLEDEESASENDE.

This sequence belongs to the DarP family.

It is found in the cytoplasm. In terms of biological role, member of a network of 50S ribosomal subunit biogenesis factors which assembles along the 30S-50S interface, preventing incorrect 23S rRNA structures from forming. Promotes peptidyl transferase center (PTC) maturation. This Xanthomonas campestris pv. campestris (strain 8004) protein is Dual-action ribosomal maturation protein DarP.